A 141-amino-acid polypeptide reads, in one-letter code: Nucleoside triphosphatase NudI (141 aa).

Residues 1–141 enclose the Nudix hydrolase domain; sequence MRQRTIVCPL…RHTLALKGLL (141 aa). Residues 38-59 carry the Nudix box motif; it reads GGVEPGERIEEALRREIREELG.

This sequence belongs to the Nudix hydrolase family. NudI subfamily. In terms of assembly, monomer. Mg(2+) serves as cofactor.

The catalysed reaction is a ribonucleoside 5'-triphosphate + H2O = a ribonucleoside 5'-phosphate + diphosphate + H(+). It catalyses the reaction a 2'-deoxyribonucleoside 5'-triphosphate + H2O = a 2'-deoxyribonucleoside 5'-phosphate + diphosphate + H(+). It carries out the reaction dUTP + H2O = dUMP + diphosphate + H(+). The enzyme catalyses dTTP + H2O = dTMP + diphosphate + H(+). The catalysed reaction is dCTP + H2O = dCMP + diphosphate + H(+). Its function is as follows. Catalyzes the hydrolysis of nucleoside triphosphates, with a preference for pyrimidine deoxynucleoside triphosphates (dUTP, dTTP and dCTP). In Salmonella paratyphi B (strain ATCC BAA-1250 / SPB7), this protein is Nucleoside triphosphatase NudI.